The sequence spans 154 residues: Putative nuclear shuttle protein (154 aa).

The protein belongs to the nanoviridae nuclear shuttle protein family.

It is found in the host nucleus. It localises to the host cytoplasm. Its function is as follows. Putative nuclear shuttle protein. The polypeptide is Putative nuclear shuttle protein (DNA-N) (Musa (BBTV)).